We begin with the raw amino-acid sequence, 817 residues long: MPIDRSVVRARIENAAEYVGPLWPLRTFNAANPLLGFEDQPFDRAVQKAGQLFGGRGYPGPTVFRQAWENGEIDADVLTRHLAEHGITERPEVLLDRMDADAAGRDAAPADQPLDRVLTKWLAAFLDQGQAAWPMPNREDGFYAAWRTVAPYDGDIPGVGRPSDLPGTVVEAFEAVLESYPEARWEPIFVHHLTALPGWTGFIKWRSRRADTAWQAAHPISLTEYLAVRLTLADRMGAAIAPDRTDELPANGTDQPVLPRIWLRAWEESYRTRLLDDLRQTQQTTPSGSDAGRPDAQLVFCIDTRSEVIRRHIEQQGPYETHGYAGFFGVPMQHQPYGTEERVKSCPPIVDPKHRIMERPAEPHRAQAERYDWWARLQKAGAALLKTLKKNVAAVFGFVEGSGGFFGAAMAARTLAPSGLSRLDEALDDWLPGPASFCEPTVDRAPPADADAEDGLPVGLADEAKVLYAEAAFRLMGWTDTFAPVVVFTGHGSQTPNNPYKASLDCGACAGNPGGPNARVLAAICNEDAVQEALRERGIAIPDDTVFLAGQHNTTTDEIALFVDEDDPPVAPDALDRLRRDLHAAQADAATERVRTLNTSVDEGRPAAAVRETERRAADWAETRPEWGLAGNAAFIVGPRALTRGLDLDGRCFLHSYDWATDDDGTALENIMTGPLVVGEWINTQYYFSTVDNAAYGSGSKVTQNVVGKLGVVQGNGGDLMSGLPLQSLKADDEHVHHRPLRLMALIQAPTDRVEAILDRHAAVAHLFDHEWMHLTVMDPEQDDAFVRYKPGGGWHARPAPDASTATKAPASAGVPS.

The Zn(2+) site is built by Cys-301, Asp-303, His-491, and Cys-506. Disordered stretches follow at residues 598-617 (NTSVDEGRPAAAVRETERRA) and 794-817 (GWHARPAPDASTATKAPASAGVPS).

Belongs to the inorganic carbon transporter (TC 9.A.2) DabA family. As to quaternary structure, forms a complex with DabB. Zn(2+) is required as a cofactor.

It localises to the cell inner membrane. Its function is as follows. Part of an energy-coupled inorganic carbon pump. The sequence is that of Probable inorganic carbon transporter subunit DabA from Salinibacter ruber (strain DSM 13855 / M31).